We begin with the raw amino-acid sequence, 590 residues long: Aspartate--tRNA(Asp/Asn) ligase (590 aa).

Glutamate 172 contacts L-aspartate. The segment at 196–199 (QLFK) is aspartate. Arginine 218 is an L-aspartate binding site. ATP-binding positions include 218–220 (RDE) and glutamine 227. Histidine 449 contributes to the L-aspartate binding site. ATP is bound at residue glutamate 484. Arginine 491 contributes to the L-aspartate binding site. 536-539 (GIDR) lines the ATP pocket.

It belongs to the class-II aminoacyl-tRNA synthetase family. Type 1 subfamily. In terms of assembly, homodimer.

It is found in the cytoplasm. The catalysed reaction is tRNA(Asx) + L-aspartate + ATP = L-aspartyl-tRNA(Asx) + AMP + diphosphate. Functionally, aspartyl-tRNA synthetase with relaxed tRNA specificity since it is able to aspartylate not only its cognate tRNA(Asp) but also tRNA(Asn). Reaction proceeds in two steps: L-aspartate is first activated by ATP to form Asp-AMP and then transferred to the acceptor end of tRNA(Asp/Asn). The polypeptide is Aspartate--tRNA(Asp/Asn) ligase (Francisella tularensis subsp. tularensis (strain SCHU S4 / Schu 4)).